Reading from the N-terminus, the 326-residue chain is tRNA uridine(34) hydroxylase (326 aa).

Residues 122–218 (EENRCLVLDV…YGQAVGTGKW (97 aa)) enclose the Rhodanese domain. Cys178 (cysteine persulfide intermediate) is an active-site residue.

This sequence belongs to the TrhO family.

The enzyme catalyses uridine(34) in tRNA + AH2 + O2 = 5-hydroxyuridine(34) in tRNA + A + H2O. Its function is as follows. Catalyzes oxygen-dependent 5-hydroxyuridine (ho5U) modification at position 34 in tRNAs. This is tRNA uridine(34) hydroxylase from Chlamydia abortus (strain DSM 27085 / S26/3) (Chlamydophila abortus).